A 31-amino-acid chain; its full sequence is Mu-conotoxin SmIIIA (31 aa).

Positions 1–6 (PLFDKR) are excised as a propeptide. The residue at position 7 (Gln-7) is a Pyrrolidone carboxylic acid. Disulfide bonds link Cys-9–Cys-21, Cys-10–Cys-27, and Cys-16–Cys-28. The residue at position 28 (Cys-28) is a Cysteine amide.

Belongs to the conotoxin M superfamily. SmIIIA' is a putative isoform where the N-terminal AA is missing. Expressed by the venom duct.

It localises to the secreted. Mu-conotoxins block voltage-gated sodium channels (Nav). This toxin blocks rNav1.5/SCN5A (IC(50) is 1.3 uM), rNav1.6/SCN8A (IC(50) is 160 nM), rNav1.7/SCN9A (IC(50) is 1.3 uM), rNav1.1/SCN1A (K(d) is 3.8 nM), rNav1.2/SCN2A (K(d) is 1.3 nM), rNav1.4/SCN4A (K(d) is 0.22 nM), rNav1.6/SCN8A (K(d) is 69 nM), and rNav1.7/SCN9A (K(d) is 260 nM). This toxin is very potent but weakly discriminating among sodium channels. The block of these channels is modified when beta-subunits are coexpressed with alpha subunits. Hence, blocks of channels containing beta-1 and beta-3 subunits are more potent (compared to channels without beta subunits), whereas blocks of channels containing beta-2 and beta-4 subunits are less potent (compared to channels without beta subunits). The chain is Mu-conotoxin SmIIIA from Conus stercusmuscarum (Fly-specked cone).